Here is a 387-residue protein sequence, read N- to C-terminus: Gamma-butyrobetaine dioxygenase (387 aa).

4 residues coordinate Zn(2+): Cys-38, Cys-40, Cys-43, and His-82. Fe cation contacts are provided by His-202, Asp-204, and His-347. Ser-351 is subject to Phosphoserine.

It belongs to the gamma-BBH/TMLD family. It depends on Fe(2+) as a cofactor. Requires L-ascorbate as cofactor.

The protein localises to the cytoplasm. The enzyme catalyses 4-(trimethylamino)butanoate + 2-oxoglutarate + O2 = carnitine + succinate + CO2. It participates in amine and polyamine biosynthesis; carnitine biosynthesis. In terms of biological role, catalyzes the formation of L-carnitine from gamma-butyrobetaine. This Mus musculus (Mouse) protein is Gamma-butyrobetaine dioxygenase (Bbox1).